Reading from the N-terminus, the 223-residue chain is DNA mismatch repair protein MutH (223 aa).

It belongs to the MutH family.

It is found in the cytoplasm. Sequence-specific endonuclease that cleaves unmethylated GATC sequences. It is involved in DNA mismatch repair. This Haemophilus influenzae (strain ATCC 51907 / DSM 11121 / KW20 / Rd) protein is DNA mismatch repair protein MutH.